The chain runs to 131 residues: Snaclec A13 (131 aa).

3 disulfide bridges follow: cysteine 4-cysteine 15, cysteine 32-cysteine 125, and cysteine 100-cysteine 117. Positions tyrosine 11–methionine 126 constitute a C-type lectin domain.

It belongs to the snaclec family. Heterodimer; disulfide-linked. Expressed by the venom gland.

Its subcellular location is the secreted. Its function is as follows. Interferes with one step of hemostasis (modulation of platelet aggregation, or coagulation cascade, for example). The chain is Snaclec A13 from Macrovipera lebetinus (Levantine viper).